Reading from the N-terminus, the 310-residue chain is Glutaminase 1 (310 aa).

Residues Ser66, Asn117, Glu161, Asn168, Tyr192, Tyr244, and Val262 each coordinate substrate. Lys294 bears the N6-acetyllysine mark.

The protein belongs to the glutaminase family. As to quaternary structure, homotetramer.

The catalysed reaction is L-glutamine + H2O = L-glutamate + NH4(+). This is Glutaminase 1 from Escherichia coli O157:H7.